A 932-amino-acid chain; its full sequence is Glycine dehydrogenase (decarboxylating) (932 aa).

Lys-685 is subject to N6-(pyridoxal phosphate)lysine.

This sequence belongs to the GcvP family. As to quaternary structure, the glycine cleavage system is composed of four proteins: P, T, L and H. Pyridoxal 5'-phosphate serves as cofactor.

It catalyses the reaction N(6)-[(R)-lipoyl]-L-lysyl-[glycine-cleavage complex H protein] + glycine + H(+) = N(6)-[(R)-S(8)-aminomethyldihydrolipoyl]-L-lysyl-[glycine-cleavage complex H protein] + CO2. In terms of biological role, the glycine cleavage system catalyzes the degradation of glycine. The P protein binds the alpha-amino group of glycine through its pyridoxal phosphate cofactor; CO(2) is released and the remaining methylamine moiety is then transferred to the lipoamide cofactor of the H protein. This chain is Glycine dehydrogenase (decarboxylating), found in Brucella suis biovar 1 (strain 1330).